The sequence spans 150 residues: MSKQVGLIHSLKDGQSYMEIWPVRKELNAIFPEQRIIKATRFGIKVMPAVAAISVLTQMAFNNYDSLPQAIVVALFAISMPLQGMWWLGSRSNTKLPPALASWYRELHQKITETGFALEPVKARPRYKELAVILNRAFRQLDKTALERWF.

The next 2 helical transmembrane spans lie at 42–62 (FGIK…MAFN) and 70–90 (AIVV…WLGS).

Belongs to the UPF0208 family.

It localises to the cell inner membrane. This chain is UPF0208 membrane protein VIBHAR_02941, found in Vibrio campbellii (strain ATCC BAA-1116).